A 393-amino-acid chain; its full sequence is MTGPITRKDLMIVNMGPQHPSMHGVLRLIVTLDGEDVIDCEPVLGYLHRGMEKIAENRTIIQYLPYVTRWDYLATMFTEAITINAPEQLGNIQVPKRASYIRVIMLELSRIASHLLWLGPFMADIGAQTPFFYIFRERELIYDLFEAATGMRMMHNFFRIGGIAADLPYGWIDKCLDFCEYFLPAIAEYQTLITRNPIFLERVEGVGIIGGEEAINWGLSGPMLRASGIQWDLRKIDHYESYEEFDWEVQWQKEGDSLARYLTRIGEMAESIKIIQQALEGIPGGPYENLEIRRCNKVRDPEWNNFEYRFISKRPSPTFELSQQELYVRVEAPKGELGIFLIGDRSAFPWRWKIRPPGFINLQILPQLVKRMKLADIMTILGSIDIIMGEIDR.

This sequence belongs to the complex I 49 kDa subunit family. As to quaternary structure, NDH is composed of at least 16 different subunits, 5 of which are encoded in the nucleus.

Its subcellular location is the plastid. The protein localises to the chloroplast thylakoid membrane. The enzyme catalyses a plastoquinone + NADH + (n+1) H(+)(in) = a plastoquinol + NAD(+) + n H(+)(out). It catalyses the reaction a plastoquinone + NADPH + (n+1) H(+)(in) = a plastoquinol + NADP(+) + n H(+)(out). Its function is as follows. NDH shuttles electrons from NAD(P)H:plastoquinone, via FMN and iron-sulfur (Fe-S) centers, to quinones in the photosynthetic chain and possibly in a chloroplast respiratory chain. The immediate electron acceptor for the enzyme in this species is believed to be plastoquinone. Couples the redox reaction to proton translocation, and thus conserves the redox energy in a proton gradient. In Fagopyrum esculentum subsp. ancestrale (Wild buckwheat), this protein is NAD(P)H-quinone oxidoreductase subunit H, chloroplastic.